We begin with the raw amino-acid sequence, 249 residues long: Large ribosomal subunit protein uL30A (249 aa).

The protein belongs to the universal ribosomal protein uL30 family. Component of the small ribosomal subunit (SSU). Mature yeast ribosomes consist of a small (40S) and a large (60S) subunit. The 40S small subunit contains 1 molecule of ribosomal RNA (18S rRNA) and at least 33 different proteins. The large 60S subunit contains 3 rRNA molecules (25S, 5.8S and 5S rRNA) and at least 46 different proteins.

Its subcellular location is the cytoplasm. The protein resides in the nucleus. The protein localises to the nucleolus. Its function is as follows. Component of the ribosome, a large ribonucleoprotein complex responsible for the synthesis of proteins in the cell. The small ribosomal subunit (SSU) binds messenger RNAs (mRNAs) and translates the encoded message by selecting cognate aminoacyl-transfer RNA (tRNA) molecules. The large subunit (LSU) contains the ribosomal catalytic site termed the peptidyl transferase center (PTC), which catalyzes the formation of peptide bonds, thereby polymerizing the amino acids delivered by tRNAs into a polypeptide chain. The nascent polypeptides leave the ribosome through a tunnel in the LSU and interact with protein factors that function in enzymatic processing, targeting, and the membrane insertion of nascent chains at the exit of the ribosomal tunnel. The protein is Large ribosomal subunit protein uL30A (rlp7) of Schizosaccharomyces pombe (strain 972 / ATCC 24843) (Fission yeast).